We begin with the raw amino-acid sequence, 267 residues long: Small ribosomal subunit protein uS2 (267 aa).

The segment at 226 to 267 (AAAPNSASVREEEFSAESADEGKGRRAPAKKGEKKADAPAAE) is disordered. Residues 245-267 (DEGKGRRAPAKKGEKKADAPAAE) show a composition bias toward basic and acidic residues.

The protein belongs to the universal ribosomal protein uS2 family.

This Xanthomonas oryzae pv. oryzae (strain MAFF 311018) protein is Small ribosomal subunit protein uS2.